The chain runs to 294 residues: MNSELDYYEKFEEVHGILMYKDFVKYWDNVEAFQARPDDLVIATYPKSGTTWVSEIVYMIYKEGDVEKCKEDVIFNRIPFLECRKENLMNGVKQLDEMNSPRIVKTHLPPELLPASFWEKDCKIIYLCRNAKDVAVSFYYFFLMVAGHPNPGSFPEFVEKFMQGQVPYGSWYKHVKSWWEKGKSPRVLFLFYEDLKEDIRKEVIKLIHFLERKPSEELVDRIIHHTSFQEMKNNPSTNYTTLPDEIMNQKLSPFMRKGITGDWKNHFTVALNEKFDKHYEQQMKESTLKFRTEI.

Residue Lys-47–Trp-52 participates in 3'-phosphoadenylyl sulfate binding. Lys-105–His-107 serves as a coordination point for substrate. His-107 acts as the Proton acceptor in catalysis. Residues Arg-129, Ser-137, Tyr-192, Thr-226–Met-231, and Arg-256–Gly-258 each bind 3'-phosphoadenylyl sulfate.

It belongs to the sulfotransferase 1 family. Homodimer. As to expression, liver, intestine and at lower level in the kidney.

It is found in the cytoplasm. Its subcellular location is the cytosol. It catalyses the reaction estrone + 3'-phosphoadenylyl sulfate = estrone 3-sulfate + adenosine 3',5'-bisphosphate + H(+). The enzyme catalyses (24S)-hydroxycholesterol + 3'-phosphoadenylyl sulfate = (24S)-hydroxycholesterol 3-sulfate + adenosine 3',5'-bisphosphate + H(+). It carries out the reaction 17beta-estradiol + 3'-phosphoadenylyl sulfate = 17beta-estradiol 3-sulfate + adenosine 3',5'-bisphosphate + H(+). The catalysed reaction is 3beta-hydroxyandrost-5-en-17-one + 3'-phosphoadenylyl sulfate = dehydroepiandrosterone 3-sulfate + adenosine 3',5'-bisphosphate + H(+). It catalyses the reaction 4-ethylphenol + 3'-phosphoadenylyl sulfate = 4-ethylphenyl sulfate + adenosine 3',5'-bisphosphate + H(+). With respect to regulation, inhibited by estradiol. Sulfotransferase that utilizes 3'-phospho-5'-adenylyl sulfate (PAPS) as sulfonate donor to catalyze the sulfate conjugation of estradiol and estrone. Is a key enzyme in estrogen homeostasis, the sulfation of estrogens leads to their inactivation. Also sulfates dehydroepiandrosterone (DHEA), pregnenolone, (24S)-hydroxycholesterol and xenobiotic compounds like ethinylestradiol, equalenin, diethyl stilbesterol and 1-naphthol at significantly lower efficiency. Does not sulfonate cortisol, testosterone and dopamine. May play a role in gut microbiota-host metabolic interaction. O-sulfonates 4-ethylphenol (4-EP), a dietary tyrosine-derived metabolite produced by gut bacteria. The product 4-EPS crosses the blood-brain barrier and may negatively regulate oligodendrocyte maturation and myelination, affecting the functional connectivity of different brain regions associated with the limbic system. In Homo sapiens (Human), this protein is Sulfotransferase 1E1 (SULT1E1).